The sequence spans 683 residues: Cyclic nucleotide-gated channel alpha-1 (683 aa).

Residues 1–160 (MKTNIINTWH…PSGNMYYNWL (160 aa)) are Cytoplasmic-facing. Positions 34–144 (ACSSFSDNDN…PKEKKEEEKK (111 aa)) are disordered. The segment covering 105–144 (SKADDKKESKKDPEKKKKKEKEKEKKKEEKPKEKKEEEKK) has biased composition (basic and acidic residues). A helical membrane pass occupies residues 161–182 (FCITLPVMYNWTMIIARACFDE). Topologically, residues 183–192 (LQSDYLEYWL) are extracellular. The chain crosses the membrane as a helical span at residues 193–213 (IFDYVSDVVYLADMFVRTRTG). Over 214 to 238 (YLEQGLLVKDELKLIEKYKANLQFK) the chain is Cytoplasmic. A helical transmembrane segment spans residues 239–257 (LDVLSVIPTDLLYFKFGWN). Residues 258 to 262 (YPEIR) lie on the Extracellular side of the membrane. Residues 263–281 (LNRLLRISRMFEFFQRTET) traverse the membrane as a helical segment. Topologically, residues 282 to 288 (RTNYPNI) are cytoplasmic. An ion conduction pathway region spans residues 286–394 (PNIFRISNLV…GNIGSMISNM (109 aa)). The helical transmembrane segment at 289-312 (FRISNLVMYIVIIIHWNACVYYSI) threads the bilayer. Topologically, residues 313–335 (SKAIGFGNDTWVYPDVNDPEFGR) are extracellular. Asn-320 is a glycosylation site (N-linked (GlcNAc...) asparagine). 2 consecutive transmembrane segments (helical) span residues 336–370 (LARK…VFVV) and 371–395 (VDFL…SNMN). The interval 353-356 (TIGE) is selectivity filter. Residues 396–472 (AARAEFQSRV…DTLKKVRIFA (77 aa)) are C-linker. Over 396 to 683 (AARAEFQSRV…ESEPTESLQG (288 aa)) the chain is Cytoplasmic. The interval 476 to 596 (AGLLVELVLK…EEKGRQILMK (121 aa)) is cyclic nucleotide-binding domain. 4 residues coordinate 3',5'-cyclic GMP: Gly-536, Ser-539, Arg-552, and Thr-553. Residues Arg-552 and Thr-553 each coordinate 3',5'-cyclic AMP. Residues 614-668 (LEEKVTRMEGSVDLLQTRFARILAEYESMQQKLKQRLTKVEKFLKPLIETEFSAL) are a coiled coil.

This sequence belongs to the cyclic nucleotide-gated cation channel (TC 1.A.1.5) family. CNGA1 subfamily. Forms heterotetrameric channels composed of CNGA1 and CNGB1 subunits with 3:1 stoichiometry. May also form cyclic nucleotide-activated homotetrameric channels, that are efficiently activated by saturating cGMP, but poorly activated by saturating cAMP compared to the heterotetramer with CNGB1. The channel binds Ca(2+)-bound CALM1 via CaM1 and CaM2 regions of the CNGB1 subunit; this interaction modulates the affinity of the channel for cNMPs in response to intracellular Ca(2+) levels. Rod cells in the retina.

It localises to the cell membrane. It catalyses the reaction Ca(2+)(in) = Ca(2+)(out). It carries out the reaction Na(+)(in) = Na(+)(out). The catalysed reaction is K(+)(in) = K(+)(out). The enzyme catalyses NH4(+)(in) = NH4(+)(out). It catalyses the reaction Rb(+)(in) = Rb(+)(out). It carries out the reaction Li(+)(in) = Li(+)(out). The catalysed reaction is Cs(+)(in) = Cs(+)(out). Pore-forming subunit of the rod cyclic nucleotide-gated channel. Mediates rod photoresponses at dim light converting transient changes in intracellular cGMP levels into electrical signals. In the dark, cGMP levels are high and keep the channel open enabling a steady inward current carried by Na(+) and Ca(2+) ions that leads to membrane depolarization and neurotransmitter release from synaptic terminals. Upon photon absorption cGMP levels decline leading to channel closure and membrane hyperpolarization that ultimately slows neurotransmitter release and signals the presence of light, the end point of the phototransduction cascade. Conducts cGMP- and cAMP-gated ion currents, with permeability for monovalent and divalent cations. The selectivity for Ca(2+) over Na(+) increases with cGMP concentrations, whereas the selectivity among monovalent ions is independent of the cGMP levels. In Rattus norvegicus (Rat), this protein is Cyclic nucleotide-gated channel alpha-1.